The sequence spans 815 residues: MVSRLRGFLAWVYRWITTTDHKDIGLLYLVTSIAFLLIAGSLALLFRVQLAIPKSNFLTGDAYYEAVTVHGLIMLLWFASPFAFGLANYIVPLQIGARDLAFPRLNALSYWLYLLSGLVLLASFFTESGAPNVGWTLYAPLTARIYTPGIGLDLAALAIFLFSLSVTLGTINFLVTIAAMRAPGIGWFKMPMFTWSILFTVILMLWAFPPLMVGGALLLLDRNLGTEFFLNPAGGALLWDHLFWFFGHPEVYILLFPALGAMADVISTFSGKPIYAKRYILTAFLIATIISFVVWMHHMFITGTNIYTRLFYSITTILISIPFEMAVMSFIFTLYKGRLVYTVPMLFAVGALLNFIIGGSTGVYLGSIAIDRGFRGTYWVVAHFHYILVGTVTLGLIAGLYYWWPKITGRTYSERLGKIHFALAMLGVALTFLPQFALMDMPRRYFTYDIPEWVPLNQLSTLGAFIFGGSMAIGLVNFLYSLVKGGSAAPNPWNSWTLEWFTNSPPPKHNFDGVPVVRKDNTVVFVSEEALSKYGKDAIVEGRVDVSNVPLSGGQSHSSHGLTHHGTTDPLVLAAGLTLALFGLFVSKPLSYLGAIVFLLSLARWLWKDVKNVFAEELPGYVEHWPFPKDKIRSAMWVFIASEVATFGSIFSAYFFIRFNPVGKFLTEAWPPGYLVHDVNVGLINTIILFTGTMLFTLAYLGVKRDNYLITLSGLLGTLFMAIYFLTVKYFEWKELLIAGLGLDAGMYMQAYYVTTGAHALHVILGVLATTYLLVKLFNGNLRGRQALSEVLAVGIYWGIVEIVWTLVFPLYYLV.

The tract at residues Met1–Phe467 is COX1. Residues Leu26–Phe46 traverse the membrane as a helical segment. His70 is a Fe(II)-heme a binding site. 18 consecutive transmembrane segments (helical) span residues Gly71–Val91, Leu105–Phe125, Leu157–Ile177, Ile197–Leu217, Leu242–Met262, Leu281–Ile301, Ile314–Leu334, Leu339–Gly359, Val380–Leu400, Ile419–Met439, Gly463–Val483, Ala580–Leu600, Trp637–Ile657, Leu683–Val703, Tyr708–Val728, Leu736–Thr756, Ala758–Phe778, and Val791–Leu811. Residues His248, Tyr252, His297, and His298 each coordinate Cu cation. The segment at residues His248–Tyr252 is a cross-link (1'-histidyl-3'-tyrosine (His-Tyr)). Heme a3 is bound at residue His383. His385 is a Fe(II)-heme a binding site. Residues Asp545–Val815 form a COX3 region.

In the N-terminal section; belongs to the heme-copper respiratory oxidase family. The protein in the C-terminal section; belongs to the cytochrome c oxidase subunit 3 family. Heme is required as a cofactor. Cu cation serves as cofactor.

Its subcellular location is the cell membrane. This chain is Heme-copper oxidase subunit I+III (aoxB), found in Aeropyrum pernix (strain ATCC 700893 / DSM 11879 / JCM 9820 / NBRC 100138 / K1).